We begin with the raw amino-acid sequence, 92 residues long: Putative pterin-4-alpha-carbinolamine dehydratase 2 (92 aa).

The protein belongs to the pterin-4-alpha-carbinolamine dehydratase family.

The catalysed reaction is (4aS,6R)-4a-hydroxy-L-erythro-5,6,7,8-tetrahydrobiopterin = (6R)-L-erythro-6,7-dihydrobiopterin + H2O. This is Putative pterin-4-alpha-carbinolamine dehydratase 2 from Gloeobacter violaceus (strain ATCC 29082 / PCC 7421).